Here is a 168-residue protein sequence, read N- to C-terminus: uncharacterized protein (168 aa).

Disordered stretches follow at residues 1 to 35 (MGSS…KKLD), 48 to 97 (KVKK…DKGN), and 126 to 168 (ASIT…GLGM). The stretch at 29 to 95 (KEKKKLDEKE…KNSLSRSQDK (67 aa)) forms a coiled coil. Residues 68–85 (LAEDPMVKNVAENDHDQM) are compositionally biased toward basic and acidic residues. Positions 126–139 (ASITESSPSAQSNK) are enriched in polar residues. Positions 140–150 (TNDKQREKELE) are enriched in basic and acidic residues. Residues 157 to 168 (VLHKGTKKGLGM) show a composition bias toward basic residues.

This is an uncharacterized protein from Schizosaccharomyces pombe (strain 972 / ATCC 24843) (Fission yeast).